A 235-amino-acid chain; its full sequence is 15,16-dihydrobiliverdin:ferredoxin oxidoreductase (235 aa).

The protein belongs to the HY2 family.

The catalysed reaction is 15,16-dihydrobiliverdin + oxidized 2[4Fe-4S]-[ferredoxin] = biliverdin IXalpha + reduced 2[4Fe-4S]-[ferredoxin] + 2 H(+). In terms of biological role, catalyzes the two-electron reduction of biliverdin IX-alpha at the C15 methine bridge. This is 15,16-dihydrobiliverdin:ferredoxin oxidoreductase from Synechococcus sp. (strain CC9605).